The chain runs to 260 residues: Endonuclease NucS (260 aa).

It belongs to the NucS endonuclease family.

Its subcellular location is the cytoplasm. In terms of biological role, cleaves both 3' and 5' ssDNA extremities of branched DNA structures. The protein is Endonuclease NucS of Methanopyrus kandleri (strain AV19 / DSM 6324 / JCM 9639 / NBRC 100938).